The sequence spans 106 residues: UPF0145 protein Nmul_A0734 (106 aa).

It belongs to the UPF0145 family.

The polypeptide is UPF0145 protein Nmul_A0734 (Nitrosospira multiformis (strain ATCC 25196 / NCIMB 11849 / C 71)).